A 307-amino-acid chain; its full sequence is MTQVNLLSELNSIASEGRNIDTLDIDTLPTLAILEKINQEDHKVAAAVSAAMADITSGVEAIVSSFNRGGRLVYMGAGTSGRLGILDAVECMPTFSVPEGMVIGLIAGGEKAVIHAVEGAEDDRAMGVADLKALNFSDKDTLVGIAASGRTPYVAAGLEYAKQCKATTIAVNCSPNSVIGQIADIDICAQVGPEVLTGSTRLKSGTAQKLILNMLSTASMIRIGKTYQNLMVDLNASNQKLYARAVRIVMQATDCEEQTAYEALDHANKEVKVAILMILTGVDVQQAREKLAQKQGFLRHAMSQGES.

Residues 62–225 (IVSSFNRGGR…STASMIRIGK (164 aa)) enclose the SIS domain. Glu-90 (proton donor) is an active-site residue. Glu-121 is a catalytic residue.

This sequence belongs to the GCKR-like family. MurNAc-6-P etherase subfamily. Homodimer.

It catalyses the reaction N-acetyl-D-muramate 6-phosphate + H2O = N-acetyl-D-glucosamine 6-phosphate + (R)-lactate. The protein operates within amino-sugar metabolism; 1,6-anhydro-N-acetylmuramate degradation. Its pathway is amino-sugar metabolism; N-acetylmuramate degradation. It participates in cell wall biogenesis; peptidoglycan recycling. Its function is as follows. Specifically catalyzes the cleavage of the D-lactyl ether substituent of MurNAc 6-phosphate, producing GlcNAc 6-phosphate and D-lactate. Together with AnmK, is also required for the utilization of anhydro-N-acetylmuramic acid (anhMurNAc) either imported from the medium or derived from its own cell wall murein, and thus plays a role in cell wall recycling. The sequence is that of N-acetylmuramic acid 6-phosphate etherase from Pseudoalteromonas atlantica (strain T6c / ATCC BAA-1087).